The chain runs to 206 residues: MPLRDDGVLRGSLVLAVFTLFGLGLAYSLIATGITGALFSEQATGSLMRVDARVVGSALVAQPFTDARYFQPRPSAAKYDLTAAAGSNQARSNPDLLARIATTRAQVAARDGIAPEAVPGELLTQSGSGLDPHLSPAGAQVQIRRVAAARGWPEQRVAALVQATTEAAPQFGLLGQPRVNVLALNLALDQAGNGESGRGNGVKQAH.

A helical membrane pass occupies residues 14-34 (VLAVFTLFGLGLAYSLIATGI).

This sequence belongs to the KdpC family. In terms of assembly, the system is composed of three essential subunits: KdpA, KdpB and KdpC.

It localises to the cell inner membrane. Its function is as follows. Part of the high-affinity ATP-driven potassium transport (or Kdp) system, which catalyzes the hydrolysis of ATP coupled with the electrogenic transport of potassium into the cytoplasm. This subunit acts as a catalytic chaperone that increases the ATP-binding affinity of the ATP-hydrolyzing subunit KdpB by the formation of a transient KdpB/KdpC/ATP ternary complex. In Xanthomonas axonopodis pv. citri (strain 306), this protein is Potassium-transporting ATPase KdpC subunit.